The sequence spans 475 residues: Bifunctional protein HldE (475 aa).

The segment at 1 to 320 is ribokinase; that stretch reads MNSSYLNFKD…AIMFQRSHNT (320 aa). 196-199 contributes to the ATP binding site; the sequence is NLLE. Residue Asp-265 is part of the active site. Positions 346–475 are cytidylyltransferase; the sequence is FTNGCFDILH…TTSIIEKANL (130 aa).

In the N-terminal section; belongs to the carbohydrate kinase PfkB family. It in the C-terminal section; belongs to the cytidylyltransferase family. Homodimer.

It carries out the reaction D-glycero-beta-D-manno-heptose 7-phosphate + ATP = D-glycero-beta-D-manno-heptose 1,7-bisphosphate + ADP + H(+). The catalysed reaction is D-glycero-beta-D-manno-heptose 1-phosphate + ATP + H(+) = ADP-D-glycero-beta-D-manno-heptose + diphosphate. The protein operates within nucleotide-sugar biosynthesis; ADP-L-glycero-beta-D-manno-heptose biosynthesis; ADP-L-glycero-beta-D-manno-heptose from D-glycero-beta-D-manno-heptose 7-phosphate: step 1/4. Its pathway is nucleotide-sugar biosynthesis; ADP-L-glycero-beta-D-manno-heptose biosynthesis; ADP-L-glycero-beta-D-manno-heptose from D-glycero-beta-D-manno-heptose 7-phosphate: step 3/4. In terms of biological role, catalyzes the phosphorylation of D-glycero-D-manno-heptose 7-phosphate at the C-1 position to selectively form D-glycero-beta-D-manno-heptose-1,7-bisphosphate. Functionally, catalyzes the ADP transfer from ATP to D-glycero-beta-D-manno-heptose 1-phosphate, yielding ADP-D-glycero-beta-D-manno-heptose. The chain is Bifunctional protein HldE from Marinomonas sp. (strain MWYL1).